The following is a 443-amino-acid chain: Threonine/serine transporter TdcC (443 aa).

Transmembrane regions (helical) follow at residues 22–42, 44–64, 97–117, 140–160, 163–183, 207–227, 259–279, 319–339, 366–386, 389–409, and 423–443; these read TTWT…FFPI, AGFG…PIAF, GVVI…IYGV, VVAL…KDLM, VMSY…LSLI, ILVT…FSPI, ASML…FTLS, ASII…LGTL, LSMV…PNIL, IEAM…MYAI, and DNLF…YKLF.

The protein belongs to the amino acid/polyamine transporter 2 family. SdaC/TdcC subfamily.

It localises to the cell inner membrane. The catalysed reaction is L-threonine(in) + H(+)(in) = L-threonine(out) + H(+)(out). It carries out the reaction L-serine(in) + H(+)(in) = L-serine(out) + H(+)(out). In terms of biological role, involved in the import of threonine and serine into the cell, with the concomitant import of a proton (symport system). The sequence is that of Threonine/serine transporter TdcC from Klebsiella pneumoniae (strain 342).